We begin with the raw amino-acid sequence, 588 residues long: Transport ATP-binding protein AarD (588 aa).

Positions 24-316 constitute an ABC transmembrane type-1 domain; the sequence is LRISMLLGVV…LGTYYHAKAQ (293 aa). 6 consecutive transmembrane segments (helical) span residues 29–49, 62–82, 149–169, 170–190, 250–270, and 276–296; these read LLGV…AVIL, LLTP…LTVI, IIPI…ALIL, FATA…AADA, SGVL…YFGF, and LNFG…ALIL. Residues 350–583 form the ABC transporter domain; sequence IEANKLEIYS…EGPFARLLAH (234 aa). ATP is bound at residue 383 to 390; that stretch reads GQSGAGKS.

The protein belongs to the ABC transporter superfamily.

It is found in the cell inner membrane. Its function is as follows. Somehow involved in the cytochrome D branch of aerobic respiration. Seems to be a component of a transport system. This Providencia stuartii protein is Transport ATP-binding protein AarD (aarD).